We begin with the raw amino-acid sequence, 570 residues long: 5-aminolevulinate synthase, mitochondrial (570 aa).

A mitochondrion-targeting transit peptide spans 1–53 (MESVIRSSAKICPFMHSATGSMQSVKALKNANLPAIAQQCPFMGKAMEQRRGY). Arginine 119, serine 232, and lysine 251 together coordinate substrate. Residues serine 284, histidine 312, and threonine 356 each coordinate pyridoxal 5'-phosphate. Residue lysine 359 is part of the active site. The residue at position 359 (lysine 359) is an N6-(pyridoxal phosphate)lysine. The pyridoxal 5'-phosphate site is built by threonine 388 and threonine 389. Threonine 474 is a binding site for substrate.

It belongs to the class-II pyridoxal-phosphate-dependent aminotransferase family. In terms of assembly, homodimer. Requires pyridoxal 5'-phosphate as cofactor.

It is found in the mitochondrion matrix. It catalyses the reaction succinyl-CoA + glycine + H(+) = 5-aminolevulinate + CO2 + CoA. It participates in porphyrin-containing compound metabolism; protoporphyrin-IX biosynthesis; 5-aminolevulinate from glycine: step 1/1. Its function is as follows. Catalyzes the synthesis of 5-aminolevulinate (ALA) from succinyl-CoA and glycine, the first and rate-limiting step in heme biosynthesis. The chain is 5-aminolevulinate synthase, mitochondrial (HEM1) from Kluyveromyces lactis (strain ATCC 8585 / CBS 2359 / DSM 70799 / NBRC 1267 / NRRL Y-1140 / WM37) (Yeast).